Consider the following 868-residue polypeptide: DNA mismatch repair protein MutS (868 aa).

623–630 (GPNMAGKS) contributes to the ATP binding site.

Belongs to the DNA mismatch repair MutS family.

Functionally, this protein is involved in the repair of mismatches in DNA. It is possible that it carries out the mismatch recognition step. This protein has a weak ATPase activity. In Magnetococcus marinus (strain ATCC BAA-1437 / JCM 17883 / MC-1), this protein is DNA mismatch repair protein MutS.